The sequence spans 579 residues: Putative laccase-9 (579 aa).

A signal peptide spans 1 to 27 (MGTAKLPALLWLLAGVVLALAVNPAHG). Plastocyanin-like domains follow at residues 36–152 (FITE…PKRG) and 162–319 (KEIP…YTDS). Asn41 and Asn82 each carry an N-linked (GlcNAc...) asparagine glycan. The Cu cation site is built by His86 and His88. The N-linked (GlcNAc...) asparagine glycan is linked to Asn114. The Cu cation site is built by His131 and His133. N-linked (GlcNAc...) asparagine glycans are attached at residues Asn307, Asn405, and Asn446. In terms of domain architecture, Plastocyanin-like 3 spans 436–563 (PTAFVDPPVN…DTVFIVKDGK (128 aa)). Residues His480, His483, and His485 each contribute to the Cu cation site. N-linked (GlcNAc...) asparagine glycosylation occurs at Asn496. Cu cation is bound by residues His542, Cys543, His544, His548, and Met553.

Belongs to the multicopper oxidase family. The cofactor is Cu cation.

It localises to the secreted. The protein localises to the extracellular space. It is found in the apoplast. It carries out the reaction 4 hydroquinone + O2 = 4 benzosemiquinone + 2 H2O. Its function is as follows. Lignin degradation and detoxification of lignin-derived products. This is Putative laccase-9 (LAC9) from Oryza sativa subsp. japonica (Rice).